The chain runs to 55 residues: uncharacterized protein (55 aa).

This is an uncharacterized protein from Acidianus hospitalis (AFV-1).